Reading from the N-terminus, the 248-residue chain is Probable proteasome subunit alpha type-3 (248 aa).

This sequence belongs to the peptidase T1A family. In terms of assembly, the 26S proteasome consists of a 20S proteasome core and two 19S regulatory subunits. The 20S proteasome core is composed of 28 subunits that are arranged in four stacked rings, resulting in a barrel-shaped structure. The two end rings are each formed by seven alpha subunits, and the two central rings are each formed by seven beta subunits. The catalytic chamber with the active sites is on the inside of the barrel.

Its subcellular location is the cytoplasm. It localises to the nucleus. In terms of biological role, the proteasome is a multicatalytic proteinase complex which is characterized by its ability to cleave peptides with Arg, Phe, Tyr, Leu, and Glu adjacent to the leaving group at neutral or slightly basic pH. The proteasome has an ATP-dependent proteolytic activity. In Schizosaccharomyces pombe (strain 972 / ATCC 24843) (Fission yeast), this protein is Probable proteasome subunit alpha type-3.